Consider the following 130-residue polypeptide: kinetoplast-associated protein 2-1 (130 aa).

The propeptide occupies 1-10 (MLRRTVSNFA). The tract at residues 89–130 (LTKKWNETKQAQREKAQKAQKKTKSAKSKVKKAAKKSKKSKK) is disordered. The span at 92–105 (KWNETKQAQREKAQ) shows a compositional bias: basic and acidic residues. Basic residues predominate over residues 106-130 (KAQKKTKSAKSKVKKAAKKSKKSKK).

Belongs to the KAP family. As to quaternary structure, associates with the kinetoplast DNA network.

The protein resides in the mitochondrion matrix. Its subcellular location is the kinetoplast. Functionally, histone H1-like DNA-binding protein involved in the organization and segregation of kinetoplast DNA (kDNA). The mitochondrial DNA of kinetoplastid protozoa consists of about 5,000 minicircles and 20 to 30 maxicircles. These circular DNAs are held together by catenation into a highly organized compact disk structure referred to as a kinetoplast DNA (kDNA) network. Binds preferentially to a specific fragment of minicircle DNA and is able to compact kDNA networks through DNA charge neutralization and condensation. The protein is kinetoplast-associated protein 2-1 (KAP2-1) of Crithidia fasciculata.